Consider the following 450-residue polypeptide: Phosphomethylpyrimidine synthase (450 aa).

Substrate-binding positions include asparagine 80, methionine 109, tyrosine 138, histidine 173, 193–195, 234–237, and glutamate 273; these read SRG and DSLR. Histidine 277 is a Zn(2+) binding site. Tyrosine 300 lines the substrate pocket. A Zn(2+)-binding site is contributed by histidine 341. [4Fe-4S] cluster is bound by residues cysteine 421, cysteine 424, and cysteine 429.

The protein belongs to the ThiC family. As to quaternary structure, homodimer. The cofactor is [4Fe-4S] cluster.

The catalysed reaction is 5-amino-1-(5-phospho-beta-D-ribosyl)imidazole + S-adenosyl-L-methionine = 4-amino-2-methyl-5-(phosphooxymethyl)pyrimidine + CO + 5'-deoxyadenosine + formate + L-methionine + 3 H(+). The protein operates within cofactor biosynthesis; thiamine diphosphate biosynthesis. Functionally, catalyzes the synthesis of the hydroxymethylpyrimidine phosphate (HMP-P) moiety of thiamine from aminoimidazole ribotide (AIR) in a radical S-adenosyl-L-methionine (SAM)-dependent reaction. This Campylobacter fetus subsp. fetus (strain 82-40) protein is Phosphomethylpyrimidine synthase.